The chain runs to 354 residues: Ornithine carbamoyltransferase, catabolic (354 aa).

Carbamoyl phosphate contacts are provided by residues 67–70 (STRT), Gln94, Arg118, and 145–148 (HPTQ). L-ornithine-binding positions include Asn177, Asp241, and 245–246 (SM). Residues 284 to 285 (CL) and Arg329 each bind carbamoyl phosphate.

This sequence belongs to the aspartate/ornithine carbamoyltransferase superfamily. OTCase family.

It localises to the cytoplasm. The catalysed reaction is carbamoyl phosphate + L-ornithine = L-citrulline + phosphate + H(+). It participates in amino-acid degradation; L-arginine degradation via ADI pathway; carbamoyl phosphate from L-arginine: step 2/2. Its function is as follows. Reversibly catalyzes the transfer of the carbamoyl group from carbamoyl phosphate (CP) to the N(epsilon) atom of ornithine (ORN) to produce L-citrulline. This is Ornithine carbamoyltransferase, catabolic (arcB) from Lactococcus lactis subsp. cremoris (Streptococcus cremoris).